Here is a 397-residue protein sequence, read N- to C-terminus: ATP-dependent RNA helicase eIF4A (397 aa).

Residues 24–52 (DSFDEMNLKPELLRGIYAYGFERPSAIQQ) carry the Q motif motif. Positions 55–225 (IMPVIKGHDV…TKFMREPVRI (171 aa)) constitute a Helicase ATP-binding domain. An ATP-binding site is contributed by 68–75 (AQSGTGKT). Residues 173–176 (DEAD) carry the DEAD box motif. The Helicase C-terminal domain maps to 236 to 397 (GIKQFYIAVE…EMPMNVADLI (162 aa)).

The protein belongs to the DEAD box helicase family. eIF4A subfamily. In terms of assembly, component of the eIF4F complex, which composition varies with external and internal environmental conditions. It is composed of at least eIF4A, eIF4E and eIF4G.

The protein localises to the cytoplasm. It catalyses the reaction ATP + H2O = ADP + phosphate + H(+). ATP-dependent RNA helicase which is a subunit of the eIF4F complex involved in cap recognition and is required for mRNA binding to ribosome. In the current model of translation initiation, eIF4A unwinds RNA secondary structures in the 5'-UTR of mRNAs which is necessary to allow efficient binding of the small ribosomal subunit, and subsequent scanning for the initiator codon. This chain is ATP-dependent RNA helicase eIF4A (tif-1), found in Neurospora crassa (strain ATCC 24698 / 74-OR23-1A / CBS 708.71 / DSM 1257 / FGSC 987).